A 114-amino-acid chain; its full sequence is T cell receptor beta variable 3-1 (114 aa).

Positions 1 to 21 (MGCRLLCCVVFCLLQAGPLDT) are cleaved as a signal peptide. Residues 22–114 (AVSQTPKYLV…SAVYFCASSQ (93 aa)) form the Ig-like domain. Cysteine 42 and cysteine 110 are disulfide-bonded. N-linked (GlcNAc...) asparagine glycosylation occurs at asparagine 76.

Alpha-beta TR is a heterodimer composed of an alpha and beta chain; disulfide-linked. The alpha-beta TR is associated with the transmembrane signaling CD3 coreceptor proteins to form the TR-CD3 (TcR or TCR). The assembly of alpha-beta TR heterodimers with CD3 occurs in the endoplasmic reticulum where a single alpha-beta TR heterodimer associates with one CD3D-CD3E heterodimer, one CD3G-CD3E heterodimer and one CD247 homodimer forming a stable octameric structure. CD3D-CD3E and CD3G-CD3E heterodimers preferentially associate with TR alpha and TR beta chains, respectively. The association of the CD247 homodimer is the last step of TcR assembly in the endoplasmic reticulum and is required for transport to the cell surface.

The protein resides in the cell membrane. Functionally, v region of the variable domain of T cell receptor (TR) beta chain that participates in the antigen recognition. Alpha-beta T cell receptors are antigen specific receptors which are essential to the immune response and are present on the cell surface of T lymphocytes. Recognize peptide-major histocompatibility (MH) (pMH) complexes that are displayed by antigen presenting cells (APC), a prerequisite for efficient T cell adaptive immunity against pathogens. Binding of alpha-beta TR to pMH complex initiates TR-CD3 clustering on the cell surface and intracellular activation of LCK that phosphorylates the ITAM motifs of CD3G, CD3D, CD3E and CD247 enabling the recruitment of ZAP70. In turn ZAP70 phosphorylates LAT, which recruits numerous signaling molecules to form the LAT signalosome. The LAT signalosome propagates signal branching to three major signaling pathways, the calcium, the mitogen-activated protein kinase (MAPK) kinase and the nuclear factor NF-kappa-B (NF-kB) pathways, leading to the mobilization of transcription factors that are critical for gene expression and essential for T cell growth and differentiation. The T cell repertoire is generated in the thymus, by V-(D)-J rearrangement. This repertoire is then shaped by intrathymic selection events to generate a peripheral T cell pool of self-MH restricted, non-autoaggressive T cells. Post-thymic interaction of alpha-beta TR with the pMH complexes shapes TR structural and functional avidity. This chain is T cell receptor beta variable 3-1, found in Homo sapiens (Human).